The chain runs to 153 residues: Inner membrane protein YjiG (153 aa).

Over 1–31 the chain is Periplasmic; the sequence is MTTQVRKNVMDMFIDGARRGFTIATTNLLPN. The helical transmembrane segment at 32–52 threads the bilayer; the sequence is VVMAFVIIQALKITGLLDWVG. Residues 53–68 are Cytoplasmic-facing; sequence HICEPVMALWGLPGEA. 2 consecutive transmembrane segments (helical) span residues 69–89 and 90–110; these read ATVLLAALMSMGGAVGVAASL and ATAGALTGHDVTVLLPAMYLM. Residues 111 to 132 lie on the Cytoplasmic side of the membrane; sequence GNPVQNVGRCLGTAEVNAKYYP. Residues 133 to 153 traverse the membrane as a helical segment; that stretch reads HIITVCVINALLSIWVMQLIV.

Belongs to the SpmB family.

The protein localises to the cell inner membrane. The sequence is that of Inner membrane protein YjiG (yjiG) from Escherichia coli O157:H7.